Reading from the N-terminus, the 56-residue chain is Protein SspF (56 aa).

The protein belongs to the alpha/beta-type SASP family.

In terms of biological role, may play some important role in either sporulation or the dormant spore. The polypeptide is Protein SspF (sspF) (Priestia megaterium (strain ATCC 12872 / QMB1551) (Bacillus megaterium)).